The sequence spans 431 residues: Peptidase B (431 aa).

The Mn(2+) site is built by Lys-196 and Asp-201. Residue Lys-208 is part of the active site. Asp-219, Asp-278, and Glu-280 together coordinate Mn(2+). Residue Arg-282 is part of the active site.

The protein belongs to the peptidase M17 family. In terms of assembly, homohexamer. Mn(2+) serves as cofactor.

Its subcellular location is the cytoplasm. It carries out the reaction Release of an N-terminal amino acid, Xaa, from a peptide or arylamide. Xaa is preferably Glu or Asp but may be other amino acids, including Leu, Met, His, Cys and Gln.. Its function is as follows. Probably plays an important role in intracellular peptide degradation. The sequence is that of Peptidase B from Serratia proteamaculans (strain 568).